We begin with the raw amino-acid sequence, 211 residues long: Dephospho-CoA kinase (211 aa).

Positions 3 to 206 (VLGLTGGIGS…PGMKGPDPHA (204 aa)) constitute a DPCK domain. Residue 11–16 (GSGKSI) participates in ATP binding.

Belongs to the CoaE family.

The protein resides in the cytoplasm. The enzyme catalyses 3'-dephospho-CoA + ATP = ADP + CoA + H(+). It functions in the pathway cofactor biosynthesis; coenzyme A biosynthesis; CoA from (R)-pantothenate: step 5/5. Functionally, catalyzes the phosphorylation of the 3'-hydroxyl group of dephosphocoenzyme A to form coenzyme A. The polypeptide is Dephospho-CoA kinase (Syntrophotalea carbinolica (strain DSM 2380 / NBRC 103641 / GraBd1) (Pelobacter carbinolicus)).